Here is a 359-residue protein sequence, read N- to C-terminus: ATP-dependent (S)-NAD(P)H-hydrate dehydratase (359 aa).

The YjeF C-terminal domain occupies 61 to 350 (LLEEARKVVP…SEINSVFVNN (290 aa)). Residues Gly161 and 214-220 (NVVEFQR) each bind (6S)-NADPHX. Residues 256–260 (KGEVD) and 275–284 (GSPRRCGGQG) each bind ATP. Asp285 serves as a coordination point for (6S)-NADPHX.

Belongs to the NnrD/CARKD family. Requires Mg(2+) as cofactor.

The catalysed reaction is (6S)-NADHX + ATP = ADP + phosphate + NADH + H(+). It carries out the reaction (6S)-NADPHX + ATP = ADP + phosphate + NADPH + H(+). Its function is as follows. Catalyzes the dehydration of the S-form of NAD(P)HX at the expense of ATP, which is converted to ADP. Together with NAD(P)HX epimerase, which catalyzes the epimerization of the S- and R-forms, the enzyme allows the repair of both epimers of NAD(P)HX, a damaged form of NAD(P)H that is a result of enzymatic or heat-dependent hydration. The chain is ATP-dependent (S)-NAD(P)H-hydrate dehydratase from Ciona intestinalis (Transparent sea squirt).